Here is a 342-residue protein sequence, read N- to C-terminus: tRNA N6-adenosine threonylcarbamoyltransferase (342 aa).

Fe cation contacts are provided by H115 and H119. Substrate is bound by residues 137–141, D170, G183, D187, and N276; that span reads IVSGG. Position 304 (D304) interacts with Fe cation.

Belongs to the KAE1 / TsaD family. Fe(2+) serves as cofactor.

The protein localises to the cytoplasm. The enzyme catalyses L-threonylcarbamoyladenylate + adenosine(37) in tRNA = N(6)-L-threonylcarbamoyladenosine(37) in tRNA + AMP + H(+). Its function is as follows. Required for the formation of a threonylcarbamoyl group on adenosine at position 37 (t(6)A37) in tRNAs that read codons beginning with adenine. Is involved in the transfer of the threonylcarbamoyl moiety of threonylcarbamoyl-AMP (TC-AMP) to the N6 group of A37, together with TsaE and TsaB. TsaD likely plays a direct catalytic role in this reaction. In Staphylococcus saprophyticus subsp. saprophyticus (strain ATCC 15305 / DSM 20229 / NCIMB 8711 / NCTC 7292 / S-41), this protein is tRNA N6-adenosine threonylcarbamoyltransferase.